Reading from the N-terminus, the 255-residue chain is PABIR family member 2 (255 aa).

The interval 1 to 24 is disordered; the sequence is MAQEKMDLDFEADTSEGATLRRSN. N-acetylalanine is present on A2. S25, S33, S50, and S58 each carry phosphoserine. T112 carries the phosphothreonine modification. S115 and S119 each carry phosphoserine. At R122 the chain carries Omega-N-methylarginine. The residue at position 145 (S145) is a Phosphoserine. Disordered stretches follow at residues 169–196 and 219–238; these read LGPL…SMLS and SGLS…SPVA. A compositionally biased stretch (basic and acidic residues) spans 174-184; the sequence is RKGEMEMESQP.

It belongs to the FAM122 family.

The polypeptide is PABIR family member 2 (Mus musculus (Mouse)).